The sequence spans 42 residues: Photosystem I reaction center subunit IX (42 aa).

A helical membrane pass occupies residues 7-27 (YLSVAPVLSTLWFGALAGLLI).

This sequence belongs to the PsaJ family.

It localises to the plastid. Its subcellular location is the chloroplast thylakoid membrane. May help in the organization of the PsaE and PsaF subunits. This chain is Photosystem I reaction center subunit IX, found in Agrostis stolonifera (Creeping bentgrass).